We begin with the raw amino-acid sequence, 309 residues long: Porphobilinogen deaminase (309 aa).

Cysteine 241 bears the S-(dipyrrolylmethanemethyl)cysteine mark.

This sequence belongs to the HMBS family. Monomer. Dipyrromethane is required as a cofactor.

The enzyme catalyses 4 porphobilinogen + H2O = hydroxymethylbilane + 4 NH4(+). The protein operates within porphyrin-containing compound metabolism; protoporphyrin-IX biosynthesis; coproporphyrinogen-III from 5-aminolevulinate: step 2/4. In terms of biological role, tetrapolymerization of the monopyrrole PBG into the hydroxymethylbilane pre-uroporphyrinogen in several discrete steps. The protein is Porphobilinogen deaminase of Oceanobacillus iheyensis (strain DSM 14371 / CIP 107618 / JCM 11309 / KCTC 3954 / HTE831).